The chain runs to 228 residues: 2,3-bisphosphoglycerate-dependent phosphoglycerate mutase (228 aa).

Substrate is bound by residues 8–15 (RHGQSQWN), 21–22 (TG), R60, 87–90 (ERHY), K98, 114–115 (RR), and 180–181 (GN). H9 (tele-phosphohistidine intermediate) is an active-site residue. The Proton donor/acceptor role is filled by E87.

This sequence belongs to the phosphoglycerate mutase family. BPG-dependent PGAM subfamily. As to quaternary structure, homodimer.

It carries out the reaction (2R)-2-phosphoglycerate = (2R)-3-phosphoglycerate. Its pathway is carbohydrate degradation; glycolysis; pyruvate from D-glyceraldehyde 3-phosphate: step 3/5. Its function is as follows. Catalyzes the interconversion of 2-phosphoglycerate and 3-phosphoglycerate. This Erythrobacter litoralis (strain HTCC2594) protein is 2,3-bisphosphoglycerate-dependent phosphoglycerate mutase.